The sequence spans 552 residues: Chaperonin GroEL (552 aa).

ATP contacts are provided by residues 29–32 (TAGP), Lys-50, 86–90 (DGTTT), Gly-417, and Asp-499.

Belongs to the chaperonin (HSP60) family. As to quaternary structure, forms a cylinder of 14 subunits composed of two heptameric rings stacked back-to-back. Interacts with the co-chaperonin GroES.

It localises to the cytoplasm. The catalysed reaction is ATP + H2O + a folded polypeptide = ADP + phosphate + an unfolded polypeptide.. Functionally, together with its co-chaperonin GroES, plays an essential role in assisting protein folding. The GroEL-GroES system forms a nano-cage that allows encapsulation of the non-native substrate proteins and provides a physical environment optimized to promote and accelerate protein folding. This chain is Chaperonin GroEL, found in Ehrlichia canis (strain Jake).